A 661-amino-acid polypeptide reads, in one-letter code: uncharacterized protein (661 aa).

The segment at 25 to 52 is disordered; that stretch reads LLPSEPPVGDMNNEDSDTNTSITQSPTN. Residues 42 to 52 are compositionally biased toward polar residues; the sequence is TNTSITQSPTN. Residues 246 to 297 form the SANT domain; that stretch reads SMPDIWNEEQHSIFVQQFILHGKKFGKIAEAVPGKNSKECVLHYYLTKRTTD. 4 disordered regions span residues 306-329, 478-499, 548-570, and 604-633; these read TKTK…KSKG, YYEP…TRKE, PMKM…TFQL, and RIDE…PNSQ. Residues 308 to 328 show a composition bias toward basic residues; it reads TKGRRRKKLLPSQRGGKKKSK. Basic and acidic residues predominate over residues 478 to 487; it reads YYEPKLEQHS. Residues 604–617 show a composition bias toward basic and acidic residues; the sequence is RIDELSVEDQEHTT.

Its subcellular location is the nucleus. This is an uncharacterized protein from Schizosaccharomyces pombe (strain 972 / ATCC 24843) (Fission yeast).